The primary structure comprises 436 residues: 3-ketoacyl-CoA thiolase (436 aa).

The active-site Acyl-thioester intermediate is cysteine 99. Active-site proton acceptor residues include histidine 392 and cysteine 422.

The protein belongs to the thiolase-like superfamily. Thiolase family. As to quaternary structure, heterotetramer of two alpha chains (FadJ) and two beta chains (FadI).

The protein resides in the cytoplasm. It carries out the reaction an acyl-CoA + acetyl-CoA = a 3-oxoacyl-CoA + CoA. The protein operates within lipid metabolism; fatty acid beta-oxidation. Functionally, catalyzes the final step of fatty acid oxidation in which acetyl-CoA is released and the CoA ester of a fatty acid two carbons shorter is formed. The polypeptide is 3-ketoacyl-CoA thiolase (Shigella dysenteriae serotype 1 (strain Sd197)).